The primary structure comprises 421 residues: Heterogeneous nuclear ribonucleoprotein 27C (421 aa).

2 consecutive RRM domains span residues 7-88 (GKLF…RTLQ) and 96-173 (YKVF…KAEP). Disordered regions lie at residues 171–191 (AEPRDGSGGQNSNNSTVGGAY) and 240–373 (GTSP…SEYD). Ser177 carries the post-translational modification Phosphoserine. Over residues 240–250 (GTSPQQQQYGY) the composition is skewed to polar residues. Residues 264–273 (PPGPQGPPPQ) are compositionally biased toward pro residues. Residues 275-284 (SNYAGPQQTQ) are compositionally biased toward polar residues. The span at 293 to 302 (NSTSTGAPSG) shows a compositional bias: low complexity. Residues Ser366, Ser368, and Ser370 each carry the phosphoserine modification. Tyr372 is modified (phosphotyrosine). Ser379 is subject to Phosphoserine. The segment at 392-421 (EGASNYGAGPRSAYGNDSSTQPPYATSQAV) is disordered. A compositionally biased stretch (polar residues) spans 406-421 (GNDSSTQPPYATSQAV).

As to quaternary structure, interacts with sqd; the interaction is RNA-dependent and may be specific for sqd isoform A/sqdA. Interacts with otu; the interaction is RNA-independent.

The protein resides in the nucleus. The protein localises to the cytoplasm. This protein is a component of ribonucleosomes. Could be needed to organize a concentration gradient of a dorsalizing morphogen (Dm) originating in the germinal vesicle. Interacts with grk mRNA (via 3' UTR) and involved in its localization to the dorsal anterior region of the oocyte during dorsal-ventral axis determination; may function as a ribonuclear protein complex together with sqd and otu. Required for polytene chromosome dispersal in nurse cells during oogenesis. May be involved in the regulation of splicing. In Drosophila melanogaster (Fruit fly), this protein is Heterogeneous nuclear ribonucleoprotein 27C.